A 433-amino-acid polypeptide reads, in one-letter code: C4-dicarboxylate transport protein (433 aa).

8 helical membrane passes run 8–28, 44–64, 78–98, 148–168, 188–208, 222–242, 307–327, and 355–375; these read ILYV…HFWP, LIKM…IAGM, LLYF…AAHL, GDIL…AVLG, IVHV…AFTI, LIGT…GTIA, IYMT…LTLM, and AATL…ILGI.

This sequence belongs to the dicarboxylate/amino acid:cation symporter (DAACS) (TC 2.A.23) family.

The protein localises to the cell inner membrane. Functionally, responsible for the transport of dicarboxylates such as succinate, fumarate, and malate from the periplasm across the membrane. This chain is C4-dicarboxylate transport protein, found in Cupriavidus taiwanensis (strain DSM 17343 / BCRC 17206 / CCUG 44338 / CIP 107171 / LMG 19424 / R1) (Ralstonia taiwanensis (strain LMG 19424)).